Here is a 400-residue protein sequence, read N- to C-terminus: Enoyl-[acyl-carrier-protein] reductase [NADH] 1 (400 aa).

Residues 48-53 (GASSGY), 74-75 (FE), 111-112 (DA), and 139-140 (LA) contribute to the NAD(+) site. Residue Tyr225 participates in substrate binding. Catalysis depends on Tyr235, which acts as the Proton donor. NAD(+) is bound by residues Lys244 and 273–275 (VVT).

It belongs to the TER reductase family. In terms of assembly, monomer.

It carries out the reaction a 2,3-saturated acyl-[ACP] + NAD(+) = a (2E)-enoyl-[ACP] + NADH + H(+). It participates in lipid metabolism; fatty acid biosynthesis. Functionally, involved in the final reduction of the elongation cycle of fatty acid synthesis (FAS II). Catalyzes the reduction of a carbon-carbon double bond in an enoyl moiety that is covalently linked to an acyl carrier protein (ACP). The protein is Enoyl-[acyl-carrier-protein] reductase [NADH] 1 of Vibrio parahaemolyticus serotype O3:K6 (strain RIMD 2210633).